The chain runs to 554 residues: DNA ligase B (554 aa).

Catalysis depends on lysine 122, which acts as the N6-AMP-lysine intermediate.

Belongs to the NAD-dependent DNA ligase family. LigB subfamily.

The catalysed reaction is NAD(+) + (deoxyribonucleotide)n-3'-hydroxyl + 5'-phospho-(deoxyribonucleotide)m = (deoxyribonucleotide)n+m + AMP + beta-nicotinamide D-nucleotide.. Catalyzes the formation of phosphodiester linkages between 5'-phosphoryl and 3'-hydroxyl groups in double-stranded DNA using NAD as a coenzyme and as the energy source for the reaction. The chain is DNA ligase B from Pseudomonas fluorescens (strain SBW25).